The following is a 424-amino-acid chain: Chloroquine resistance transporter (424 aa).

Over residues 1-10 the composition is skewed to basic residues; the sequence is MTILKKKKKG. The tract at residues 1-32 is disordered; the sequence is MTILKKKKKGSPQITPDERYRELDSHAQNESE. Topologically, residues 1–57 are cytoplasmic; sequence MTILKKKKKGSPQITPDERYRELDSHAQNESEIQEDVPISRKIANFLKLAYNEIREN. Positions 16–29 are enriched in basic and acidic residues; it reads PDERYRELDSHAQN. A helical transmembrane segment spans residues 58-78; that stretch reads ISIYLLIIVYLCVCVMNKLLA. At 79–89 the chain is on the vacuolar side; sequence KRTLKKIGNYS. Asn87 carries an N-linked (GlcNAc...) asparagine glycan. Residues 90-110 form a helical membrane-spanning segment; that stretch reads FVTSETHNCICMVVFFALYFM. Topologically, residues 111-124 are cytoplasmic; that stretch reads FGRRVMSAKERHRN. The helical transmembrane segment at 125 to 145 threads the bilayer; the sequence is FGVQFLLISLLDACSVIIAFI. Topologically, residues 146 to 153 are vacuolar; sequence GLTRTTGN. A helical transmembrane segment spans residues 154–174; that stretch reads IQSFVMQLSIPINMFFCFLIL. Residues 175 to 179 lie on the Cytoplasmic side of the membrane; sequence RYRYH. Residues 180-200 form a helical membrane-spanning segment; sequence LFNYVGAFIIVVTIAVVEFML. Residues 201 to 208 lie on the Vacuolar side of the membrane; the sequence is SFETQEEN. A helical membrane pass occupies residues 209-229; that stretch reads SIVFNLVLIASLIPLSFSNMT. The Cytoplasmic portion of the chain corresponds to 230–246; it reads REIVFKKYKINILRLNA. A helical membrane pass occupies residues 247 to 267; that stretch reads VVSFFQIFTSCLMLPMYTLPF. Topologically, residues 268–316 are vacuolar; that stretch reads LKQINLPFSEIGTNIKNGFRCLFLGQNTIVENCGLGMSKMCDDCEGAWK. Cystine bridges form between Cys288/Cys311 and Cys300/Cys308. Residues 317 to 337 traverse the membrane as a helical segment; that stretch reads TFIAYSFFNICDNLITSFIIE. Over 338–345 the chain is Cytoplasmic; that stretch reads KFSTMTYT. A helical transmembrane segment spans residues 346 to 366; it reads IVSCIQGPAIAIAYYFKFLAG. At 367-376 the chain is on the vacuolar side; the sequence is DAVMQPRMLD. The chain crosses the membrane as a helical span at residues 377–397; that stretch reads FVTLFGYLFGSIIYRIGNIIL. Residues 398 to 424 lie on the Cytoplasmic side of the membrane; the sequence is EKKRMMEAGNDDDSEGELTNADSIITH.

This sequence belongs to the CRT-like transporter family.

Its subcellular location is the vacuole membrane. Functionally, nutrient transporter. Involved in maintaining the osmotic homeostasis of the digestive vacuole. The protein is Chloroquine resistance transporter of Plasmodium vivax (strain Salvador I).